Reading from the N-terminus, the 78-residue chain is Apolipoprotein C-I (78 aa).

The signal sequence occupies residues 1–26 (MRLILWLPVLVVVLLMVLEGPAPAQG).

This sequence belongs to the apolipoprotein C1 family.

The protein localises to the secreted. Its function is as follows. Inhibitor of lipoprotein binding to the low density lipoprotein (LDL) receptor, LDL receptor-related protein, and very low density lipoprotein (VLDL) receptor. Associates with high density lipoproteins (HDL) and the triacylglycerol-rich lipoproteins in the plasma and makes up about 10% of the protein of the VLDL and 2% of that of HDL. Appears to interfere directly with fatty acid uptake and is also the major plasma inhibitor of cholesteryl ester transfer protein (CETP). Binds free fatty acids and reduces their intracellular esterification. Modulates the interaction of APOE with beta-migrating VLDL and inhibits binding of beta-VLDL to the LDL receptor-related protein. The chain is Apolipoprotein C-I (APOC1) from Lynx pardinus (Iberian lynx).